The primary structure comprises 118 residues: Large ribosomal subunit protein bL19 (118 aa).

It belongs to the bacterial ribosomal protein bL19 family.

In terms of biological role, this protein is located at the 30S-50S ribosomal subunit interface and may play a role in the structure and function of the aminoacyl-tRNA binding site. This chain is Large ribosomal subunit protein bL19, found in Aliarcobacter butzleri (strain RM4018) (Arcobacter butzleri).